The chain runs to 138 residues: Small ribosomal subunit protein uS11c (138 aa).

The tract at residues 1–22 (MAKAIPKISSRRNGRISSRKGA) is disordered. The span at 9 to 22 (SSRRNGRISSRKGA) shows a compositional bias: basic residues.

Belongs to the universal ribosomal protein uS11 family. Part of the 30S ribosomal subunit.

It is found in the plastid. It localises to the chloroplast. The protein is Small ribosomal subunit protein uS11c of Solanum bulbocastanum (Wild potato).